We begin with the raw amino-acid sequence, 364 residues long: 3'(2'),5'-bisphosphate nucleotidase 1 (364 aa).

The active-site Proton acceptor is the Asp54. Residues Glu77, Asp141, Ile143, and Asp144 each coordinate Mg(2+). Catalysis depends on Thr146, which acts as the Proton acceptor. Adenosine 3',5'-bisphosphate contacts are provided by Thr146, His243, Ser272, Lys275, Arg289, and Asp302. 5 residues coordinate AMP: His243, Ser272, Lys275, Arg289, and Asp302. Asp302 is a binding site for Mg(2+).

It belongs to the inositol monophosphatase superfamily. The cofactor is Mg(2+).

The catalysed reaction is 3'-phosphoadenylyl sulfate + H2O = adenosine 5'-phosphosulfate + phosphate. It carries out the reaction adenosine 3',5'-bisphosphate + H2O = AMP + phosphate. The enzyme catalyses adenosine 2',5'-bisphosphate + H2O = AMP + phosphate. Functionally, phosphatase that converts adenosine 3'-phosphate 5'-phosphosulfate (PAPS) to adenosine 5'-phosphosulfate (APS) and 3'(2')-phosphoadenosine 5'-phosphate (PAP) to AMP. Regulates the flux of sulfur in the sulfur-activation pathway by converting PAPS to APS. Involved in salt tolerance. The protein is 3'(2'),5'-bisphosphate nucleotidase 1 (HAL21) of Candida albicans (strain SC5314 / ATCC MYA-2876) (Yeast).